A 149-amino-acid polypeptide reads, in one-letter code: 3-dehydroquinate dehydratase (149 aa).

Catalysis depends on Tyr26, which acts as the Proton acceptor. 3 residues coordinate substrate: Asn77, His83, and Asp90. His103 acts as the Proton donor in catalysis. Substrate contacts are provided by residues 104–105 (LS) and Arg114.

This sequence belongs to the type-II 3-dehydroquinase family. In terms of assembly, homododecamer.

The enzyme catalyses 3-dehydroquinate = 3-dehydroshikimate + H2O. It participates in metabolic intermediate biosynthesis; chorismate biosynthesis; chorismate from D-erythrose 4-phosphate and phosphoenolpyruvate: step 3/7. Functionally, catalyzes a trans-dehydration via an enolate intermediate. In Vibrio vulnificus (strain YJ016), this protein is 3-dehydroquinate dehydratase.